The primary structure comprises 262 residues: Fibroin light chain (262 aa).

A signal peptide spans 1 to 16 (MKPIFLVLLVATSAYA). An N-acetylserine; in short form modification is found at S19. An intrachain disulfide couples C101 to C160.

Silk fibroin elementary unit consists in a disulfide-linked heavy and light chain and a p25 glycoprotein in molar ratios of 6:6:1. This results in a complex of approximately 2.3 MDa. Post-translationally, the interchain disulfide bridge is essential for the intracellular transport and secretion of fibroin. Partially N-terminally processed to yield a short form which lacks the first two residues of the long form. Produced exclusively in the posterior (PSG) section of silk glands, which are essentially modified salivary glands.

It is found in the secreted. In terms of biological role, it is likely that the major role of L-chain is to prevent the retention of H-chain in ER by forming the disulfide linkage. The protein is Fibroin light chain (FIBL) of Bombyx mori (Silk moth).